A 549-amino-acid chain; its full sequence is Speedy protein E3 (549 aa).

The segment covering 1–15 (MTSHQPQPQEEQSPQ) has biased composition (low complexity). Disordered stretches follow at residues 1–74 (MTSH…EPEE), 126–145 (KRECLDESDDEPEKELAPEP), 188–218 (SPPRRSLGCKRKRECLDESDDEPEKELAPEP), 261–291 (SPPRRSLGCKRKRECLDESDDEPEKELAPEP), and 334–364 (SPPRRSLGCKRKRECLDESDDEPEKELAPEP). 5 stretches are compositionally biased toward acidic residues: residues 58–74 (DESDDEPEKELAPEPEE), 131–145 (DESDDEPEKELAPEP), 204–218 (DESDDEPEKELAPEP), 277–291 (DESDDEPEKELAPEP), and 350–364 (DESDDEPEKELAPEP).

The protein belongs to the Speedy/Ringo family. Predominantly expressed in testis and spleen.

The chain is Speedy protein E3 from Homo sapiens (Human).